Reading from the N-terminus, the 502-residue chain is Probable cytochrome P450 514A4 (502 aa).

The chain crosses the membrane as a helical span at residues 4 to 24; sequence IFTIILTITILVLSLILKDLL. Cys448 lines the heme pocket.

It belongs to the cytochrome P450 family. Heme is required as a cofactor.

It localises to the membrane. In Dictyostelium discoideum (Social amoeba), this protein is Probable cytochrome P450 514A4 (cyp514A4).